The sequence spans 863 residues: NACHT, LRR and PYD domains-containing protein 4B (863 aa).

The Pyrin domain maps to Met-1 to Ala-93. The region spanning Lys-143 to His-466 is the NACHT domain. Gly-149 to Thr-156 provides a ligand contact to ATP. LRR repeat units lie at residues Trp-618–Glu-643, Ser-683–Asp-706, Ile-717–Asn-740, Lys-741–Arg-763, Leu-765–Leu-782, Tyr-797–Asp-824, and Ser-843–Val-863.

It belongs to the NLRP family.

In terms of biological role, may be involved in inflammation and recognition of cytosolic pathogen-associated molecular patterns (PAMPs) not intercepted by membrane-bound receptors. This chain is NACHT, LRR and PYD domains-containing protein 4B (Nlrp4b), found in Mus musculus (Mouse).